Here is a 288-residue protein sequence, read N- to C-terminus: Phosphatidylserine decarboxylase proenzyme (288 aa).

Active-site charge relay system; for autoendoproteolytic cleavage activity residues include D88, H145, and S248. S248 functions as the Schiff-base intermediate with substrate; via pyruvic acid; for decarboxylase activity in the catalytic mechanism. S248 carries the pyruvic acid (Ser); by autocatalysis modification.

Belongs to the phosphatidylserine decarboxylase family. PSD-B subfamily. Prokaryotic type I sub-subfamily. As to quaternary structure, heterodimer of a large membrane-associated beta subunit and a small pyruvoyl-containing alpha subunit. Pyruvate serves as cofactor. Post-translationally, is synthesized initially as an inactive proenzyme. Formation of the active enzyme involves a self-maturation process in which the active site pyruvoyl group is generated from an internal serine residue via an autocatalytic post-translational modification. Two non-identical subunits are generated from the proenzyme in this reaction, and the pyruvate is formed at the N-terminus of the alpha chain, which is derived from the carboxyl end of the proenzyme. The autoendoproteolytic cleavage occurs by a canonical serine protease mechanism, in which the side chain hydroxyl group of the serine supplies its oxygen atom to form the C-terminus of the beta chain, while the remainder of the serine residue undergoes an oxidative deamination to produce ammonia and the pyruvoyl prosthetic group on the alpha chain. During this reaction, the Ser that is part of the protease active site of the proenzyme becomes the pyruvoyl prosthetic group, which constitutes an essential element of the active site of the mature decarboxylase.

The protein localises to the cell membrane. The enzyme catalyses a 1,2-diacyl-sn-glycero-3-phospho-L-serine + H(+) = a 1,2-diacyl-sn-glycero-3-phosphoethanolamine + CO2. The protein operates within phospholipid metabolism; phosphatidylethanolamine biosynthesis; phosphatidylethanolamine from CDP-diacylglycerol: step 2/2. Catalyzes the formation of phosphatidylethanolamine (PtdEtn) from phosphatidylserine (PtdSer). This chain is Phosphatidylserine decarboxylase proenzyme, found in Azoarcus sp. (strain BH72).